We begin with the raw amino-acid sequence, 148 residues long: UPF0260 protein YcgN (148 aa).

This sequence belongs to the UPF0260 family.

This chain is UPF0260 protein YcgN, found in Salmonella paratyphi A (strain AKU_12601).